Reading from the N-terminus, the 238-residue chain is Small ribosomal subunit protein uS2 (238 aa).

This sequence belongs to the universal ribosomal protein uS2 family.

This chain is Small ribosomal subunit protein uS2, found in Actinobacillus pleuropneumoniae serotype 7 (strain AP76).